Here is an 876-residue protein sequence, read N- to C-terminus: MAIERYNPRDAEPRWQQKWNEDKVFVTDNSDPREKYYVLEMFPYPSGRIHMGHVRNYAMGDVVARYKRARGFNVLHPMGWDAFGMPAENAAMQNKVHPKDWTYQNIATMRGQLKSMGLSLDWTREFATCDVEYYHRQQALFVDFMEKGLVYRKQSKVNWDPVDHTVLANEQVIDGRGWRSGALVEQRELTQWFFRITDFSQDLLDELDELDQWPEKVRLMQKNWIGRSEGLSLRWQTVADTAPQGFSDITVYTTRPDTLFGASFLAIAADHPLAKELSATNPAIAEFCDECRRHGTSLAALETAEKKGIDTGVKVVHPLDPSWELPVYVANFVLMDYGTGAIFGCPSGDQRDLDFARKYGLPVVAVVAPEGPDAASFTVEDTAFTDDGVMINSSFLNGMKTTDAFEAVVQKLSAQSLGNAPQAERKVNFRLRDWGISRQRYWGCPIPVIHCEVCGVVPVPKKDLPVKLPDDVTFDVPGNPLDRHSTWRHVSCPQCGHDARRETDTMDTFVDSSWYYTRFTAPWEDEPTDPQVANHWLPVDQYIGGIEHAILHLLYSRFFTRAMRETGHVGVKEPFKGLFTQGMVVHETYSRGEGLTREWVPPAELRIEENDGTRRAFLLSSGEEVKIGSIEKMSKSKKNVVDPDDIIASYGADTARFFVLSDSPPDRDVIWSEAGVEGANRFVQRVWRIIGEAAEQLKGVKPKPATEGEGLAASKAAHKTLKAVQEDLDKLAFNKAIARIYELVNALAGPLADVAAGGKPDNVKAAARDAVEILIRIIAPMTPHLAEECWSALGNEGLVAETPWPTFVASLVEENDVVMPVQVNGKKRGELTIARDADQDAVRTAALELDAVKSILAGGEPKKVIVVPQRIVNIVV.

The 'HIGH' region signature appears at 43-53 (PYPSGRIHMGH). The 'KMSKS' region signature appears at 632–636 (KMSKS). K635 provides a ligand contact to ATP.

It belongs to the class-I aminoacyl-tRNA synthetase family.

The protein localises to the cytoplasm. The enzyme catalyses tRNA(Leu) + L-leucine + ATP = L-leucyl-tRNA(Leu) + AMP + diphosphate. The protein is Leucine--tRNA ligase of Agrobacterium fabrum (strain C58 / ATCC 33970) (Agrobacterium tumefaciens (strain C58)).